A 186-amino-acid polypeptide reads, in one-letter code: Chromophore lyase CpcS/CpeS 1 (186 aa).

This sequence belongs to the CpcS/CpeS biliprotein lyase family.

In terms of biological role, covalently attaches a chromophore to Cys residue(s) of phycobiliproteins. This chain is Chromophore lyase CpcS/CpeS 1, found in Synechocystis sp. (strain ATCC 27184 / PCC 6803 / Kazusa).